The following is a 692-amino-acid chain: Elongation factor G (692 aa).

Positions 8–282 (EKTRNIGIMA…AIVDFLPAPT (275 aa)) constitute a tr-type G domain. GTP contacts are provided by residues 17-24 (AHIDAGKT), 81-85 (DTPGH), and 135-138 (NKMD).

Belongs to the TRAFAC class translation factor GTPase superfamily. Classic translation factor GTPase family. EF-G/EF-2 subfamily.

It localises to the cytoplasm. Its function is as follows. Catalyzes the GTP-dependent ribosomal translocation step during translation elongation. During this step, the ribosome changes from the pre-translocational (PRE) to the post-translocational (POST) state as the newly formed A-site-bound peptidyl-tRNA and P-site-bound deacylated tRNA move to the P and E sites, respectively. Catalyzes the coordinated movement of the two tRNA molecules, the mRNA and conformational changes in the ribosome. The chain is Elongation factor G from Moorella thermoacetica (strain ATCC 39073 / JCM 9320).